A 406-amino-acid chain; its full sequence is Arginine deiminase (406 aa).

Cysteine 396 (amidino-cysteine intermediate) is an active-site residue.

This sequence belongs to the arginine deiminase family.

Its subcellular location is the cytoplasm. The catalysed reaction is L-arginine + H2O = L-citrulline + NH4(+). Its pathway is amino-acid degradation; L-arginine degradation via ADI pathway; carbamoyl phosphate from L-arginine: step 1/2. This chain is Arginine deiminase, found in Vibrio campbellii (strain ATCC BAA-1116).